The following is a 469-amino-acid chain: Glutamate--tRNA ligase (469 aa).

Residues 9–19 carry the 'HIGH' region motif; the sequence is PSPTGFLHVGG. The 'KMSKS' region signature appears at 236-240; the sequence is KLSKR. Residue K239 participates in ATP binding.

This sequence belongs to the class-I aminoacyl-tRNA synthetase family. Glutamate--tRNA ligase type 1 subfamily. In terms of assembly, monomer.

Its subcellular location is the cytoplasm. The enzyme catalyses tRNA(Glu) + L-glutamate + ATP = L-glutamyl-tRNA(Glu) + AMP + diphosphate. Catalyzes the attachment of glutamate to tRNA(Glu) in a two-step reaction: glutamate is first activated by ATP to form Glu-AMP and then transferred to the acceptor end of tRNA(Glu). This Shewanella amazonensis (strain ATCC BAA-1098 / SB2B) protein is Glutamate--tRNA ligase.